A 314-amino-acid chain; its full sequence is DNA-directed RNA polymerase subunit alpha (314 aa).

The tract at residues 1–227 (MTYFQIECVE…SLFYPLTNLN (227 aa)) is alpha N-terminal domain (alpha-NTD). Residues 239 to 314 (EEEINQVLIE…LPKEKNIQNT (76 aa)) form an alpha C-terminal domain (alpha-CTD) region.

It belongs to the RNA polymerase alpha chain family. In plastids the minimal PEP RNA polymerase catalytic core is composed of four subunits: alpha, beta, beta', and beta''. When a (nuclear-encoded) sigma factor is associated with the core the holoenzyme is formed, which can initiate transcription.

It is found in the plastid. The protein resides in the chloroplast. It carries out the reaction RNA(n) + a ribonucleoside 5'-triphosphate = RNA(n+1) + diphosphate. DNA-dependent RNA polymerase catalyzes the transcription of DNA into RNA using the four ribonucleoside triphosphates as substrates. This is DNA-directed RNA polymerase subunit alpha from Gracilaria tenuistipitata var. liui (Red alga).